The following is a 100-amino-acid chain: Large ribosomal subunit protein bL27 (100 aa).

A propeptide spanning residues 1–9 (MIIMNLQIF) is cleaved from the precursor. Positions 13 to 32 (KGMGSSKNGRDSESKRLGTK) are disordered.

It belongs to the bacterial ribosomal protein bL27 family. Post-translationally, the N-terminus is cleaved by ribosomal processing cysteine protease Prp.

The protein is Large ribosomal subunit protein bL27 of Clostridium kluyveri (strain ATCC 8527 / DSM 555 / NBRC 12016 / NCIMB 10680 / K1).